The primary structure comprises 132 residues: Intraflagellar transport protein 20 homolog A (132 aa).

Residues 87-112 (EAQQQQLYALIAEKKMQLERYRIEYD) adopt a coiled-coil conformation.

The protein resides in the golgi apparatus. It localises to the cis-Golgi network. The protein localises to the cytoplasm. It is found in the cytoskeleton. Its subcellular location is the microtubule organizing center. The protein resides in the centrosome. It localises to the centriole. The protein localises to the cell projection. It is found in the cilium. In terms of biological role, involved in ciliary process assembly. May play a role in the trafficking of ciliary membrane proteins from the Golgi complex to the cilium. Regulates the platelet-derived growth factor receptor-alpha (PDGFRA) signaling pathway. Plays an important role in spermatogenesis, particularly spermiogenesis, when germ cells form flagella. The polypeptide is Intraflagellar transport protein 20 homolog A (ift20-a) (Xenopus laevis (African clawed frog)).